The following is a 349-amino-acid chain: Phosphoribosylformylglycinamidine cyclo-ligase (349 aa).

This sequence belongs to the AIR synthase family.

The protein resides in the cytoplasm. The catalysed reaction is 2-formamido-N(1)-(5-O-phospho-beta-D-ribosyl)acetamidine + ATP = 5-amino-1-(5-phospho-beta-D-ribosyl)imidazole + ADP + phosphate + H(+). It functions in the pathway purine metabolism; IMP biosynthesis via de novo pathway; 5-amino-1-(5-phospho-D-ribosyl)imidazole from N(2)-formyl-N(1)-(5-phospho-D-ribosyl)glycinamide: step 2/2. The polypeptide is Phosphoribosylformylglycinamidine cyclo-ligase (Jannaschia sp. (strain CCS1)).